Here is a 193-residue protein sequence, read N- to C-terminus: Ganglioside GM2 activator (193 aa).

An N-terminal signal peptide occupies residues 1 to 20; sequence MHRLPLLLLLGLLLAGSVAP. 4 disulfides stabilise this stretch: C39–C183, C99–C106, C112–C138, and C125–C136. N151 carries an N-linked (GlcNAc...) asparagine glycan.

In terms of tissue distribution, widely expressed. Most abundant in kidney and testis.

The protein resides in the lysosome. It catalyses the reaction cholesterol(in) = cholesterol(out). Binds gangliosides and stimulates ganglioside GM2 degradation. It stimulates only the breakdown of ganglioside GM2 and glycolipid GA2 by beta-hexosaminidase A. It extracts single GM2 molecules from membranes and presents them in soluble form to beta-hexosaminidase A for cleavage of N-acetyl-D-galactosamine and conversion to GM3. The large binding pocket can accommodate several single chain phospholipids and fatty acids, GM2A also exhibits some calcium-independent phospholipase activity. Has cholesterol transfer activity. The chain is Ganglioside GM2 activator from Mus musculus (Mouse).